Consider the following 503-residue polypeptide: Aspartyl/glutamyl-tRNA(Asn/Gln) amidotransferase subunit B (503 aa).

The protein belongs to the GatB/GatE family. GatB subfamily. In terms of assembly, heterotrimer of A, B and C subunits.

The enzyme catalyses L-glutamyl-tRNA(Gln) + L-glutamine + ATP + H2O = L-glutaminyl-tRNA(Gln) + L-glutamate + ADP + phosphate + H(+). It catalyses the reaction L-aspartyl-tRNA(Asn) + L-glutamine + ATP + H2O = L-asparaginyl-tRNA(Asn) + L-glutamate + ADP + phosphate + 2 H(+). Its function is as follows. Allows the formation of correctly charged Asn-tRNA(Asn) or Gln-tRNA(Gln) through the transamidation of misacylated Asp-tRNA(Asn) or Glu-tRNA(Gln) in organisms which lack either or both of asparaginyl-tRNA or glutaminyl-tRNA synthetases. The reaction takes place in the presence of glutamine and ATP through an activated phospho-Asp-tRNA(Asn) or phospho-Glu-tRNA(Gln). This is Aspartyl/glutamyl-tRNA(Asn/Gln) amidotransferase subunit B from Mycobacterium avium (strain 104).